We begin with the raw amino-acid sequence, 727 residues long: Iron-sulfur clusters transporter ATM1, mitochondrial (727 aa).

Residues 1–25 (MLIGGAQNRLYQLRTSNILGLLRTR) constitute a mitochondrion transit peptide. Residues 26–138 (SALRVGSKVE…PRGNTKVKVR (113 aa)) are Mitochondrial matrix-facing. The interval 87–107 (KSKLPNEDTAHNASEKNSKKT) is disordered. A compositionally biased stretch (basic and acidic residues) spans 90–107 (LPNEDTAHNASEKNSKKT). Residues 139 to 160 (VLLALALLIGAKVLNVQVPFFF) form a helical membrane-spanning segment. An ABC transmembrane type-1 domain is found at 139 to 429 (VLLALALLIG…LGSVYRELKQ (291 aa)). Over 161-183 (KQIIDGMNVDWSDATVALPAALG) the chain is Mitochondrial intermembrane. Residues 184–207 (LTIMCYGLARFGAVLFGELRNAIF) traverse the membrane as a helical segment. Residues 208 to 256 (ARVAQNAIRNVSLQTFEHLMKLDLGWHLSRQTGGLTRAMDRGTKGISYV) lie on the Mitochondrial matrix side of the membrane. A helical transmembrane segment spans residues 257–280 (LSAMVFHIIPITFEISVVCGILTY). Gln281 is a topological domain (mitochondrial intermembrane). The helical transmembrane segment at 282-302 (FGASFAGITFTTMLLYSIFTI) threads the bilayer. At 303–368 (RTTAWRTRFR…SQVKVAQSLA (66 aa)) the chain is on the mitochondrial matrix side. Glutathione is bound by residues 308-312 (RTRFR) and 371-374 (NSGQ). Residues 369–387 (FLNSGQSLIFTTALTGMMY) form a helical membrane-spanning segment. Residues 388–402 (MGCTGVIGGDLTVGD) lie on the Mitochondrial intermembrane side of the membrane. A helical transmembrane segment spans residues 403–424 (LVLINQLVFQLSVPLNFLGSVY). Gly421 is a glutathione binding site. Residues 425–727 (RELKQSLIDM…ETLEKLNKSI (303 aa)) are Mitochondrial matrix-facing. In terms of domain architecture, ABC transporter spans 465–701 (IKFENVTFGY…ENSLYKELWR (237 aa)). ATP contacts are provided by residues Tyr474 and 498-509 (GPSGSGKSTVLK).

It belongs to the ABC transporter superfamily. ABCB family. Heavy Metal importer (TC 3.A.1.210) subfamily. As to quaternary structure, homodimer.

Its subcellular location is the mitochondrion inner membrane. Its function is as follows. Performs an essential function in the generation of cytoplasmic iron-sulfur proteins by mediating the ATP-dependent export of Fe/S cluster precursors synthesized by NFS1 and other mitochondrial proteins. Hydrolyzes ATP. Binds glutathione and may function by transporting a glutathione-conjugated iron-sulfur compound. In Candida glabrata (strain ATCC 2001 / BCRC 20586 / JCM 3761 / NBRC 0622 / NRRL Y-65 / CBS 138) (Yeast), this protein is Iron-sulfur clusters transporter ATM1, mitochondrial.